A 200-amino-acid chain; its full sequence is Probable nicotinate-nucleotide adenylyltransferase (200 aa).

It belongs to the NadD family.

The enzyme catalyses nicotinate beta-D-ribonucleotide + ATP + H(+) = deamido-NAD(+) + diphosphate. It functions in the pathway cofactor biosynthesis; NAD(+) biosynthesis; deamido-NAD(+) from nicotinate D-ribonucleotide: step 1/1. Functionally, catalyzes the reversible adenylation of nicotinate mononucleotide (NaMN) to nicotinic acid adenine dinucleotide (NaAD). The chain is Probable nicotinate-nucleotide adenylyltransferase from Clavibacter michiganensis subsp. michiganensis (strain NCPPB 382).